We begin with the raw amino-acid sequence, 310 residues long: Probable mitochondrial import receptor subunit TOM40-2 (310 aa).

Residue Met-1 is modified to N-acetylmethionine.

Belongs to the Tom40 family. Forms part of the preprotein translocase complex of the outer mitochondrial membrane (TOM complex) which consists of at least 6 different proteins (TOM5, TOM6, TOM7, TOM20, TOM22/TOM9 and TOM40). Present in a large lipid-enriched complex called mitochondrial transmembrane lipoprotein (MTL) complex made of proteins located in the two mitochondrial membranes, including the TOM complex and the core components of the MICOS complex and containing at least digalactosyldiacylglycerol (DGDG). Binds to MIC60. Component of a mitochondrial large protein complex that contains, at least, MIC60, DGS1, TOM40, TOM20 proteins, and petC/RISP. Expressed in roots, flowers, young cotyledons and leaves.

It is found in the mitochondrion outer membrane. Its function is as follows. Central component of the receptor complex responsible for the recognition and translocation of cytosolically synthesized mitochondrial preproteins. Together with TOM22 functions as the transit peptide receptor at the surface of the mitochondrion outer membrane and facilitates the movement of preproteins into the translocation pore. Directly involved in the pore formation. This Arabidopsis thaliana (Mouse-ear cress) protein is Probable mitochondrial import receptor subunit TOM40-2.